We begin with the raw amino-acid sequence, 496 residues long: Glycerol kinase (496 aa).

Thr11 provides a ligand contact to ADP. Residues Thr11, Thr12, and Ser13 each contribute to the ATP site. Residue Thr11 coordinates sn-glycerol 3-phosphate. Arg15 contacts ADP. Residues Arg81, Glu82, Tyr133, and Asp242 each contribute to the sn-glycerol 3-phosphate site. Glycerol contacts are provided by Arg81, Glu82, Tyr133, Asp242, and Gln243. Residues Thr264 and Gly307 each coordinate ADP. 4 residues coordinate ATP: Thr264, Gly307, Gln311, and Gly408. Residues Gly408 and Asn412 each coordinate ADP.

This sequence belongs to the FGGY kinase family.

The enzyme catalyses glycerol + ATP = sn-glycerol 3-phosphate + ADP + H(+). It participates in polyol metabolism; glycerol degradation via glycerol kinase pathway; sn-glycerol 3-phosphate from glycerol: step 1/1. Inhibited by fructose 1,6-bisphosphate (FBP). Functionally, key enzyme in the regulation of glycerol uptake and metabolism. Catalyzes the phosphorylation of glycerol to yield sn-glycerol 3-phosphate. The protein is Glycerol kinase of Aromatoleum aromaticum (strain DSM 19018 / LMG 30748 / EbN1) (Azoarcus sp. (strain EbN1)).